The primary structure comprises 363 residues: Chorismate synthase (363 aa).

Positions 48 and 54 each coordinate NADP(+). FMN-binding positions include 125–127, 237–238, Gly-277, 292–296, and Arg-318; these read RSS, NA, and KPTSS.

Belongs to the chorismate synthase family. As to quaternary structure, homotetramer. FMNH2 is required as a cofactor.

The catalysed reaction is 5-O-(1-carboxyvinyl)-3-phosphoshikimate = chorismate + phosphate. It participates in metabolic intermediate biosynthesis; chorismate biosynthesis; chorismate from D-erythrose 4-phosphate and phosphoenolpyruvate: step 7/7. Catalyzes the anti-1,4-elimination of the C-3 phosphate and the C-6 proR hydrogen from 5-enolpyruvylshikimate-3-phosphate (EPSP) to yield chorismate, which is the branch point compound that serves as the starting substrate for the three terminal pathways of aromatic amino acid biosynthesis. This reaction introduces a second double bond into the aromatic ring system. This chain is Chorismate synthase, found in Pseudomonas syringae pv. syringae (strain B728a).